Consider the following 803-residue polypeptide: Phenylalanine--tRNA ligase beta subunit (803 aa).

Residues 39–152 (TPGFQKVVAG…PDASPGADAA (114 aa)) enclose the tRNA-binding domain. In terms of domain architecture, B5 spans 406-480 (RQPVTIELRP…RLYGYNRIPV (75 aa)). Residues D458, D464, E467, and E468 each coordinate Mg(2+). Residues 709-802 (PRFPAVERDL…LEERLGASLR (94 aa)) enclose the FDX-ACB domain.

This sequence belongs to the phenylalanyl-tRNA synthetase beta subunit family. Type 1 subfamily. As to quaternary structure, tetramer of two alpha and two beta subunits. Requires Mg(2+) as cofactor.

It is found in the cytoplasm. It carries out the reaction tRNA(Phe) + L-phenylalanine + ATP = L-phenylalanyl-tRNA(Phe) + AMP + diphosphate + H(+). This Moorella thermoacetica (strain ATCC 39073 / JCM 9320) protein is Phenylalanine--tRNA ligase beta subunit.